The primary structure comprises 360 residues: Holliday junction branch migration complex subunit RuvB (360 aa).

The tract at residues Met1–Pro46 is disordered. The segment at Ala13–Tyr205 is large ATPase domain (RuvB-L). Positions Asn15–Thr33 are enriched in polar residues. The segment covering His34–Pro46 has biased composition (basic and acidic residues). Residues Ile44, Arg45, Gly86, Lys89, Thr90, Thr91, Glu152–Tyr154, Arg195, Tyr205, and Arg242 each bind ATP. Thr90 is a Mg(2+) binding site. The interval Glu206–Gln276 is small ATPAse domain (RuvB-S). The segment at Lys279 to Phe360 is head domain (RuvB-H). Residues Arg334 and Arg339 each coordinate DNA.

It belongs to the RuvB family. In terms of assembly, homohexamer. Forms an RuvA(8)-RuvB(12)-Holliday junction (HJ) complex. HJ DNA is sandwiched between 2 RuvA tetramers; dsDNA enters through RuvA and exits via RuvB. An RuvB hexamer assembles on each DNA strand where it exits the tetramer. Each RuvB hexamer is contacted by two RuvA subunits (via domain III) on 2 adjacent RuvB subunits; this complex drives branch migration. In the full resolvosome a probable DNA-RuvA(4)-RuvB(12)-RuvC(2) complex forms which resolves the HJ.

The protein localises to the cytoplasm. The catalysed reaction is ATP + H2O = ADP + phosphate + H(+). In terms of biological role, the RuvA-RuvB-RuvC complex processes Holliday junction (HJ) DNA during genetic recombination and DNA repair, while the RuvA-RuvB complex plays an important role in the rescue of blocked DNA replication forks via replication fork reversal (RFR). RuvA specifically binds to HJ cruciform DNA, conferring on it an open structure. The RuvB hexamer acts as an ATP-dependent pump, pulling dsDNA into and through the RuvAB complex. RuvB forms 2 homohexamers on either side of HJ DNA bound by 1 or 2 RuvA tetramers; 4 subunits per hexamer contact DNA at a time. Coordinated motions by a converter formed by DNA-disengaged RuvB subunits stimulates ATP hydrolysis and nucleotide exchange. Immobilization of the converter enables RuvB to convert the ATP-contained energy into a lever motion, pulling 2 nucleotides of DNA out of the RuvA tetramer per ATP hydrolyzed, thus driving DNA branch migration. The RuvB motors rotate together with the DNA substrate, which together with the progressing nucleotide cycle form the mechanistic basis for DNA recombination by continuous HJ branch migration. Branch migration allows RuvC to scan DNA until it finds its consensus sequence, where it cleaves and resolves cruciform DNA. The protein is Holliday junction branch migration complex subunit RuvB of Rippkaea orientalis (strain PCC 8801 / RF-1) (Cyanothece sp. (strain PCC 8801)).